The following is a 362-amino-acid chain: UDP-N-acetylglucosamine--N-acetylmuramyl-(pentapeptide) pyrophosphoryl-undecaprenol N-acetylglucosamine transferase (362 aa).

UDP-N-acetyl-alpha-D-glucosamine-binding positions include 15 to 17 (TGG), asparagine 127, arginine 165, serine 191, isoleucine 247, 266 to 271 (ALTVSE), and glutamine 292.

It belongs to the glycosyltransferase 28 family. MurG subfamily.

It localises to the cell inner membrane. It carries out the reaction di-trans,octa-cis-undecaprenyl diphospho-N-acetyl-alpha-D-muramoyl-L-alanyl-D-glutamyl-meso-2,6-diaminopimeloyl-D-alanyl-D-alanine + UDP-N-acetyl-alpha-D-glucosamine = di-trans,octa-cis-undecaprenyl diphospho-[N-acetyl-alpha-D-glucosaminyl-(1-&gt;4)]-N-acetyl-alpha-D-muramoyl-L-alanyl-D-glutamyl-meso-2,6-diaminopimeloyl-D-alanyl-D-alanine + UDP + H(+). It participates in cell wall biogenesis; peptidoglycan biosynthesis. Its function is as follows. Cell wall formation. Catalyzes the transfer of a GlcNAc subunit on undecaprenyl-pyrophosphoryl-MurNAc-pentapeptide (lipid intermediate I) to form undecaprenyl-pyrophosphoryl-MurNAc-(pentapeptide)GlcNAc (lipid intermediate II). This Shewanella baltica (strain OS155 / ATCC BAA-1091) protein is UDP-N-acetylglucosamine--N-acetylmuramyl-(pentapeptide) pyrophosphoryl-undecaprenol N-acetylglucosamine transferase.